Reading from the N-terminus, the 165-residue chain is Chorismate pyruvate-lyase (165 aa).

4 residues coordinate substrate: M35, R77, L115, and E156.

This sequence belongs to the UbiC family. In terms of assembly, monomer.

It localises to the cytoplasm. It catalyses the reaction chorismate = 4-hydroxybenzoate + pyruvate. It functions in the pathway cofactor biosynthesis; ubiquinone biosynthesis. Removes the pyruvyl group from chorismate, with concomitant aromatization of the ring, to provide 4-hydroxybenzoate (4HB) for the ubiquinone pathway. This chain is Chorismate pyruvate-lyase, found in Salmonella gallinarum (strain 287/91 / NCTC 13346).